A 196-amino-acid chain; its full sequence is MDVVILDTGCANLSSVTYAVQRLGYTPVISRDPAVVLRADKLFMPGVGTAHAAMEQLRQRELIELIKSCTQPVLGICLGMQLLATSSEESGGITTLGMIDAPVKKMTDFGLPLPHMGWNQITAQAGNHLFRGIPDGTYFYFVHGYAMPICPNTIAQTNYGEPFTAAVEKDNFFGVQFHPERSGAAGAQLMKNFLEM.

The 195-residue stretch at 2-196 folds into the Glutamine amidotransferase type-1 domain; it reads DVVILDTGCA…AQLMKNFLEM (195 aa). The Nucleophile role is filled by cysteine 77. Catalysis depends on residues histidine 178 and glutamate 180.

As to quaternary structure, heterodimer of HisH and HisF.

The protein resides in the cytoplasm. The catalysed reaction is 5-[(5-phospho-1-deoxy-D-ribulos-1-ylimino)methylamino]-1-(5-phospho-beta-D-ribosyl)imidazole-4-carboxamide + L-glutamine = D-erythro-1-(imidazol-4-yl)glycerol 3-phosphate + 5-amino-1-(5-phospho-beta-D-ribosyl)imidazole-4-carboxamide + L-glutamate + H(+). The enzyme catalyses L-glutamine + H2O = L-glutamate + NH4(+). Its pathway is amino-acid biosynthesis; L-histidine biosynthesis; L-histidine from 5-phospho-alpha-D-ribose 1-diphosphate: step 5/9. IGPS catalyzes the conversion of PRFAR and glutamine to IGP, AICAR and glutamate. The HisH subunit catalyzes the hydrolysis of glutamine to glutamate and ammonia as part of the synthesis of IGP and AICAR. The resulting ammonia molecule is channeled to the active site of HisF. The sequence is that of Imidazole glycerol phosphate synthase subunit HisH from Yersinia pestis.